Reading from the N-terminus, the 859-residue chain is Envelope glycoprotein gp160 (859 aa).

The N-terminal stretch at 1–23 is a signal peptide; it reads MAYFSSRLPIALLLIGISGFVCK. Topologically, residues 24-678 are extracellular; the sequence is QYVTVFYGIP…WFDLTSWIKY (655 aa). Asparagine 37 carries N-linked (GlcNAc...) asparagine; by host glycosylation. A disulfide bond links cysteine 44 and cysteine 57. N-linked (GlcNAc...) asparagine; by host glycans are attached at residues asparagine 70, asparagine 112, asparagine 122, asparagine 142, asparagine 150, asparagine 165, asparagine 191, asparagine 206, asparagine 238, asparagine 241, asparagine 248, asparagine 272, asparagine 278, asparagine 289, asparagine 300, asparagine 310, asparagine 343, asparagine 367, asparagine 400, asparagine 410, asparagine 413, asparagine 450, asparagine 464, and asparagine 468. 5 cysteine pairs are disulfide-bonded: cysteine 101-cysteine 214, cysteine 108-cysteine 205, cysteine 113-cysteine 164, cysteine 227-cysteine 257, and cysteine 237-cysteine 249. A V1 region spans residues 113–163; the sequence is CSKTETNPGNASSTTTTKPTTTSRGLKTINETDPCIKNDSCTGLGEEEIMQ. The tract at residues 164–205 is V2; it reads CNFSMTGLRRDELKQYKDTWYSEDLECNNTRKYTSRCYIRTC. The tract at residues 305 to 337 is V3; it reads CKRPGNKTVVPIRTVSGLLFHSQPINKRPRQAW. An intrachain disulfide couples cysteine 305 to cysteine 338. 2 cysteine pairs are disulfide-bonded: cysteine 392-cysteine 449 and cysteine 399-cysteine 422. The V4 stretch occupies residues 399–422; that stretch reads CNMTWFLNWVENKTNTTRRNYAPC. Residues 465-471 are V5; the sequence is STTNISV. Positions 514–534 are fusion peptide; it reads GVMVLGFLGFLAMAGSAMGAT. The immunosuppression stretch occupies residues 577–593; the sequence is LQARVTAIEKYLKDQAQ. N-linked (GlcNAc...) asparagine; by host glycosylation is found at asparagine 613, asparagine 622, and asparagine 638. Residues 626–647 are a coiled coil; that stretch reads QQWEKQVHFLDANITALLEEAQ. The interval 659-680 is MPER; binding to GalCer; sequence KINSWDVFGNWFDLTSWIKYIH. The chain crosses the membrane as a helical span at residues 679-699; it reads IHLGLYIVAGLVVLRIVVYIV. Topologically, residues 700 to 859 are cytoplasmic; it reads QMLARLRKGY…IRQGLELTLL (160 aa). The YXXV motif; contains endocytosis signal signature appears at 709–712; the sequence is YRPV. Positions 715–744 are disordered; the sequence is SPPSYTQQIPIRKDRGQPANEETEEGGGND. Residue cysteine 775 is the site of S-palmitoyl cysteine; by host attachment. The Di-leucine internalization motif signature appears at 858–859; the sequence is LL.

The mature envelope protein (Env) consists of a homotrimer of non-covalently associated gp120-gp41 heterodimers. The resulting complex protrudes from the virus surface as a spike. There seems to be as few as 10 spikes on the average virion. Interacts with human CD4, CCR5 and CXCR4, to form a P4HB/PDI-CD4-CXCR4-gp120 complex. Gp120 also interacts with the C-type lectins CD209/DC-SIGN and CLEC4M/DC-SIGNR (collectively referred to as DC-SIGN(R)). Gp120 and gp41 interact with GalCer. As to quaternary structure, the mature envelope protein (Env) consists of a homotrimer of non-covalently associated gp120-gp41 heterodimers. The resulting complex protrudes from the virus surface as a spike. There seems to be as few as 10 spikes on the average virion. In terms of processing, specific enzymatic cleavages in vivo yield mature proteins. Envelope glycoproteins are synthesized as an inactive precursor that is heavily N-glycosylated and processed likely by host cell furin in the Golgi to yield the mature SU and TM proteins. The cleavage site between SU and TM requires the minimal sequence [KR]-X-[KR]-R. Post-translationally, palmitoylation of the transmembrane protein and of Env polyprotein (prior to its proteolytic cleavage) is essential for their association with host cell membrane lipid rafts. Palmitoylation is therefore required for envelope trafficking to classical lipid rafts, but not for viral replication.

It is found in the virion membrane. It localises to the host cell membrane. The protein resides in the host endosome membrane. The surface protein gp120 (SU) attaches the virus to the host lymphoid cell by binding to the primary receptor CD4. This interaction induces a structural rearrangement creating a high affinity binding site for a chemokine coreceptor like CXCR4 and/or CCR5. This peculiar 2 stage receptor-interaction strategy allows gp120 to maintain the highly conserved coreceptor-binding site in a cryptic conformation, protected from neutralizing antibodies. Since CD4 also displays a binding site for the disulfide-isomerase P4HB/PDI, a P4HB/PDI-CD4-CXCR4-gp120 complex may form. In that complex, P4HB/PDI could reach and reduce gp120 disulfide bonds, causing major conformational changes in gp120. TXN, another PDI family member could also be involved in disulfide rearrangements in Env during fusion. These changes are transmitted to the transmembrane protein gp41 and are thought to activate its fusogenic potential by unmasking its fusion peptide. In terms of biological role, the surface protein gp120 is a ligand for CD209/DC-SIGN and CLEC4M/DC-SIGNR, which are respectively found on dendritic cells (DCs), and on endothelial cells of liver sinusoids and lymph node sinuses. These interactions allow capture of viral particles at mucosal surfaces by these cells and subsequent transmission to permissive cells. DCs are professional antigen presenting cells, critical for host immunity by inducing specific immune responses against a broad variety of pathogens. They act as sentinels in various tissues where they take up antigen, process it, and present it to T-cells following migration to lymphoid organs. HIV subverts the migration properties of dendritic cells to gain access to CD4+ T-cells in lymph nodes. Virus transmission to permissive T-cells occurs either in trans (without DCs infection, through viral capture and transmission), or in cis (following DCs productive infection, through the usual CD4-gp120 interaction), thereby inducing a robust infection. In trans infection, bound virions remain infectious over days and it is proposed that they are not degraded, but protected in non-lysosomal acidic organelles within the DCs close to the cell membrane thus contributing to the viral infectious potential during DCs' migration from the periphery to the lymphoid tissues. On arrival at lymphoid tissues, intact virions recycle back to DCs' cell surface allowing virus transmission to CD4+ T-cells. Virion capture also seems to lead to MHC-II-restricted viral antigen presentation, and probably to the activation of HIV-specific CD4+ cells. Its function is as follows. The transmembrane protein gp41 (TM) acts as a class I viral fusion protein. Under the current model, the protein has at least 3 conformational states: pre-fusion native state, pre-hairpin intermediate state, and post-fusion hairpin state. During fusion of viral and target intracellular membranes, the coiled coil regions (heptad repeats) assume a trimer-of-hairpins structure, positioning the fusion peptide in close proximity to the C-terminal region of the ectodomain. The formation of this structure appears to drive apposition and subsequent fusion of viral and target cell membranes. Complete fusion occurs in host cell endosomes and is dynamin-dependent, however some lipid transfer might occur at the plasma membrane. The virus undergoes clathrin-dependent internalization long before endosomal fusion, thus minimizing the surface exposure of conserved viral epitopes during fusion and reducing the efficacy of inhibitors targeting these epitopes. Membranes fusion leads to delivery of the nucleocapsid into the cytoplasm. Functionally, the envelope glycoprotein gp160 precursor down-modulates cell surface CD4 antigen by interacting with it in the endoplasmic reticulum and blocking its transport to the cell surface. The gp120-gp41 heterodimer seems to contribute to T-cell depletion during HIV-1 infection. The envelope glycoproteins expressed on the surface of infected cells induce apoptosis through an interaction with uninfected cells expressing the receptor (CD4) and the coreceptors CXCR4 or CCR5. This type of bystander killing may be obtained by at least three distinct mechanisms. First, the interaction between the 2 cells can induce cellular fusion followed by nuclear fusion within the syncytium. Syncytia are condemned to die from apoptosis. Second, the 2 interacting cells may not fuse entirely and simply exchange plasma membrane lipids, after a sort of hemifusion process, followed by rapid death. Third, it is possible that virus-infected cells, on the point of undergoing apoptosis, fuse with CD4-expressing cells, in which case apoptosis is rapidly transmitted from one cell to the other and thus occurs in a sort of contagious fashion. In terms of biological role, the gp120-gp41 heterodimer allows rapid transcytosis of the virus through CD4 negative cells such as simple epithelial monolayers of the intestinal, rectal and endocervical epithelial barriers. Both gp120 and gp41 specifically recognize glycosphingolipids galactosyl-ceramide (GalCer) or 3' sulfo-galactosyl-ceramide (GalS) present in the lipid rafts structures of epithelial cells. Binding to these alternative receptors allows the rapid transcytosis of the virus through the epithelial cells. This transcytotic vesicle-mediated transport of virions from the apical side to the basolateral side of the epithelial cells does not involve infection of the cells themselves. This is Envelope glycoprotein gp160 (env) from Human immunodeficiency virus type 2 subtype B (isolate D205) (HIV-2).